The primary structure comprises 662 residues: UvrABC system protein B (662 aa).

A Helicase ATP-binding domain is found at 31–188; it reads DNIEGGEKAQ…NDLVDIQFER (158 aa). 44–51 contacts ATP; that stretch reads GATGTGKT. The Beta-hairpin motif lies at 97–120; that stretch reads YYDYYQPEAYVPSSDTYIEKDSSV. Positions 435 to 601 constitute a Helicase C-terminal domain; the sequence is QIDDLLGEIN…TIKKEIRDLI (167 aa). The UVR domain occupies 626–661; sequence KELVKKLEKQMQEAVEVLDFELAAQIRDMMLEVKAL.

It belongs to the UvrB family. In terms of assembly, forms a heterotetramer with UvrA during the search for lesions. Interacts with UvrC in an incision complex.

Its subcellular location is the cytoplasm. Functionally, the UvrABC repair system catalyzes the recognition and processing of DNA lesions. A damage recognition complex composed of 2 UvrA and 2 UvrB subunits scans DNA for abnormalities. Upon binding of the UvrA(2)B(2) complex to a putative damaged site, the DNA wraps around one UvrB monomer. DNA wrap is dependent on ATP binding by UvrB and probably causes local melting of the DNA helix, facilitating insertion of UvrB beta-hairpin between the DNA strands. Then UvrB probes one DNA strand for the presence of a lesion. If a lesion is found the UvrA subunits dissociate and the UvrB-DNA preincision complex is formed. This complex is subsequently bound by UvrC and the second UvrB is released. If no lesion is found, the DNA wraps around the other UvrB subunit that will check the other stand for damage. The sequence is that of UvrABC system protein B from Streptococcus pneumoniae (strain ATCC 700669 / Spain 23F-1).